The following is a 104-amino-acid chain: Enhancer of rudimentary homolog 1 (104 aa).

The protein belongs to the E(R) family. In terms of assembly, homodimer. Component of the erh1-mmi1 complex. Interacts with mmi1 (via N-terminus) in a 2:2 stoichiometry.

It is found in the nucleus. The protein localises to the cytoplasm. Forms part of the erh1-mmi1 complex that recruits the CCR4-NOT complex and the NURS complex to target RNAs. Suppresses the meiotic program during vegetative growth and promotes the meiotic program during mating. Recruitment of the NURS complex to target mRNAs promotes mRNA decay by engagement of the nuclear exosome, and formation of heterochromatin islands at meiotic genes silenced by the exosome. Recruitment of the CCR4-NOT complex to target RNAs promotes heterochromatin formation at RNAi-dependent heterochromatin domains (HOODs), including a subset of meiotic genes, lncRNAs and retrotransposons. Recruitment of the CCR4-NOT complex to rDNA promotes rDNA heterochromatin assembly. The polypeptide is Enhancer of rudimentary homolog 1 (Schizosaccharomyces pombe (strain 972 / ATCC 24843) (Fission yeast)).